Here is a 346-residue protein sequence, read N- to C-terminus: Free fatty acid receptor 3 (346 aa).

Over 1 to 19 (MDTGPDQSYFSGNHWFVFS) the chain is Extracellular. The helical transmembrane segment at 20–40 (VYLLTFLVGLPLNLLALVVFV) threads the bilayer. Over 41–47 (GKLQRRP) the chain is Cytoplasmic. A helical membrane pass occupies residues 48-68 (VAVDVLLLNLTASDLLLLLFL). Residues 69–88 (PFRMVEAANGMHWPLPFILC) are Extracellular-facing. The cysteines at positions 88 and 169 are disulfide-linked. The chain crosses the membrane as a helical span at residues 89–111 (PLSGFIFFTTIYLTALFLAAVSI). Over 112 to 132 (ERFLSVAHPLWYKTRPRLGQA) the chain is Cytoplasmic. The chain crosses the membrane as a helical span at residues 133–153 (GLVSVACWLLASAHCSVVYVI). Over 154–178 (EFSGDISHSQGTNGTCYLEFRKDQL) the chain is Extracellular. N-linked (GlcNAc...) asparagine glycosylation occurs at Asn-166. Residues 179-199 (AILLPVRLEMAVVLFVVPLII) traverse the membrane as a helical segment. At 200-222 (TSYCYSRLVWILGRGGSHRRQRR) the chain is on the cytoplasmic side. A helical membrane pass occupies residues 223–243 (VAGLLAATLLNFLVCFGPYNV). The Extracellular portion of the chain corresponds to 244-258 (SHVVGYICGESPAWR). A helical membrane pass occupies residues 259–279 (IYVTLLSTLNSCVDPFVYYFS). The Cytoplasmic portion of the chain corresponds to 280–346 (SSGFQADFHE…TGGQVACAES (67 aa)). Positions 307–330 (MELKEQKGGEEQRADRPAERKTSE) are enriched in basic and acidic residues. Positions 307 to 346 (MELKEQKGGEEQRADRPAERKTSEHSQGCGTGGQVACAES) are disordered.

This sequence belongs to the G-protein coupled receptor 1 family. Highest level in adipose tissue, and lower expression across all tissues tested. Expressed in sympathetic ganglia.

The protein resides in the cell membrane. Its function is as follows. G protein-coupled receptor that is activated by a major product of dietary fiber digestion, the short chain fatty acids (SCFAs), and that plays a role in the regulation of whole-body energy homeostasis and in intestinal immunity. In omnivorous mammals, the short chain fatty acids acetate, propionate and butyrate are produced primarily by the gut microbiome that metabolizes dietary fibers. SCFAs serve as a source of energy but also act as signaling molecules. That G protein-coupled receptor is probably coupled to the pertussis toxin-sensitive, G(i/o)-alpha family of G proteins. Its activation results in the formation of inositol 1,4,5-trisphosphate, the mobilization of intracellular calcium, the phosphorylation of the MAPK3/ERK1 and MAPK1/ERK2 kinases and the inhibition of intracellular cAMP accumulation. Activated by SCFAs and by beta-hydroxybutyrate, a ketone body produced by the liver upon starvation, it inhibits N-type calcium channels and modulates the activity of sympathetic neurons through a signaling cascade involving the beta and gamma subunits of its coupled G protein, phospholipase C and MAP kinases. Thereby, it may regulate energy expenditure through the control of the sympathetic nervous system that controls for instance heart rate. Upon activation by SCFAs accumulating in the intestine, it may also signal to the brain via neural circuits which in turn would regulate intestinal gluconeogenesis. May also control the production of hormones involved in whole-body energy homeostasis. May for instance, regulate blood pressure through renin secretion. May also regulate secretion of the PYY peptide by enteroendocrine cells and control gut motility, intestinal transit rate, and the harvesting of energy from SCFAs produced by gut microbiota. May also indirectly regulate the production of LEP/Leptin, a hormone acting on the CNS to inhibit food intake, in response to the presence of short-chain fatty acids in the intestine. Finally, may also play a role in glucose homeostasis. Besides its role in energy homeostasis, may play a role in intestinal immunity. May mediate the activation of the inflammatory and immune response by SCFAs in the gut, regulating the rapid production of chemokines and cytokines by intestinal epithelial cells. Among SCFAs, the fatty acids containing less than 6 carbons, the most potent activators are probably propionate, butyrate and pentanoate while acetate is a poor activator. This chain is Free fatty acid receptor 3 (FFAR3), found in Homo sapiens (Human).